Here is a 57-residue protein sequence, read N- to C-terminus: Delta-elapitoxin-Cb1a (57 aa).

Cystine bridges form between C3/C22, C15/C36, C40/C49, and C50/C55.

This sequence belongs to the three-finger toxin family. Short-chain subfamily. Expressed by the venom gland.

The protein localises to the secreted. This toxin shifts the voltage-dependence of Nav1.4/SCN4A activation to more hyperpolarised potentials, inhibits inactivation, and produces large ramp currents, consistent with its profound effects on contractile force in an isolated skeletal muscle preparation. This toxin produces large muscle contractions and fasciculations in the indirectly stimulated chick biventer cervicis nerve-muscle assay, which are significantly inhibited by the addition of the sodium channel antagonist tetrodotoxin. This Calliophis bivirgatus (Blue Malaysian coral snake) protein is Delta-elapitoxin-Cb1a.